A 340-amino-acid chain; its full sequence is Ferrochelatase (340 aa).

Positions 218 and 298 each coordinate Fe cation.

Belongs to the ferrochelatase family.

The protein localises to the cytoplasm. It catalyses the reaction heme b + 2 H(+) = protoporphyrin IX + Fe(2+). The protein operates within porphyrin-containing compound metabolism; protoheme biosynthesis; protoheme from protoporphyrin-IX: step 1/1. Catalyzes the ferrous insertion into protoporphyrin IX. This Wolbachia sp. subsp. Brugia malayi (strain TRS) protein is Ferrochelatase.